The primary structure comprises 529 residues: Type I inositol polyphosphate 5-phosphatase 5 (529 aa).

2 catalytic regions span residues 371 to 386 and 451 to 466; these read DRVL…VALT and KRRT…WKGE.

The protein belongs to the inositol polyphosphate 5-phosphatase family.

In terms of biological role, may be involved in the regulation of root hairs development. Required for restricting both the size of the root-hair initiation site and the width of the root hairs during the transition to tip growth, but is not required for normal subsequent tip growth. This is Type I inositol polyphosphate 5-phosphatase 5 from Arabidopsis thaliana (Mouse-ear cress).